The sequence spans 406 residues: Angiopoietin-related protein 4 (406 aa).

The signal sequence occupies residues 1-25 (MSGAPTAGAALMLCAATAVLLSAQG). Residues 100 to 143 (EVLHSLQTQLKAQNSRIQQLFHKVAQQQRHLEKQHLRIQHLQSQ) adopt a coiled-coil conformation. Asparagine 177 is a glycosylation site (N-linked (GlcNAc...) asparagine). A Fibrinogen C-terminal domain is found at 179–401 (SRLHRLPRDC…ATTMLIQPMA (223 aa)). Disulfide bonds link cysteine 188–cysteine 216 and cysteine 341–cysteine 354.

In terms of assembly, homooligomer; disulfide-linked via Cys residues in the N-terminal part of the protein. The homooligomer undergoes proteolytic processing to release the ANGPTL4 C-terminal chain, which circulates as a monomer. The homooligomer unprocessed form is able to interact with the extracellular matrix. N-glycosylated. Post-translationally, forms disulfide-linked dimers and tetramers. In terms of processing, cleaved into a smaller N-terminal chain and a larger chain that contains the fibrinogen C-terminal domain; both cleaved and uncleaved forms are detected in the extracellular space. The cleaved form is not present within the cell. In terms of tissue distribution, detected in blood plasma (at protein level). Detected in liver. Detected in white fat tissue and placenta. Expressed at high levels in the placenta, heart, liver, muscle, pancreas and lung but expressed poorly in the brain and kidney.

The protein localises to the secreted. It is found in the extracellular space. It localises to the extracellular matrix. Mediates inactivation of the lipoprotein lipase LPL, and thereby plays a role in the regulation of triglyceride clearance from the blood serum and in lipid metabolism. May also play a role in regulating glucose homeostasis and insulin sensitivity. Inhibits proliferation, migration, and tubule formation of endothelial cells and reduces vascular leakage. Upon heterologous expression, inhibits the adhesion of endothelial cell to the extracellular matrix (ECM), and inhibits the reorganization of the actin cytoskeleton, formation of actin stress fibers and focal adhesions in endothelial cells that have adhered to ANGPTL4-containing ECM (in vitro). Depending on context, may modulate tumor-related angiogenesis. Its function is as follows. Mediates inactivation of the lipoprotein lipase LPL, and thereby plays an important role in the regulation of triglyceride clearance from the blood serum and in lipid metabolism. Has higher activity in LPL inactivation than the uncleaved protein. In Homo sapiens (Human), this protein is Angiopoietin-related protein 4 (ANGPTL4).